The primary structure comprises 159 residues: Cytochrome c-type biogenesis protein CcmE (159 aa).

Topologically, residues 1–8 are cytoplasmic; sequence MNIRRKNR. Residues 9 to 29 form a helical; Signal-anchor for type II membrane protein membrane-spanning segment; the sequence is LWIACAVLAGLALTIGLVLYA. At 30–159 the chain is on the periplasmic side; that stretch reads LRSNIDLFYT…PASVYKDPAS (130 aa). 2 residues coordinate heme: His-130 and Tyr-134. Positions 132–147 are enriched in basic and acidic residues; it reads ENYTPPEVEKAMEANH. Residues 132-159 are disordered; sequence ENYTPPEVEKAMEANHRRPASVYKDPAS.

Belongs to the CcmE/CycJ family.

Its subcellular location is the cell inner membrane. Heme chaperone required for the biogenesis of c-type cytochromes. Transiently binds heme delivered by CcmC and transfers the heme to apo-cytochromes in a process facilitated by CcmF and CcmH. The polypeptide is Cytochrome c-type biogenesis protein CcmE (Shigella sonnei (strain Ss046)).